A 189-amino-acid polypeptide reads, in one-letter code: GMP synthase [glutamine-hydrolyzing] subunit A (189 aa).

A Glutamine amidotransferase type-1 domain is found at 1 to 189 (MIVILNNGGQ…CKKCGFEFEE (189 aa)). Residue C76 is the Nucleophile of the active site. Residues H163 and E165 contribute to the active site.

In terms of assembly, heterodimer composed of a glutamine amidotransferase subunit (A) and a GMP-binding subunit (B).

The enzyme catalyses XMP + L-glutamine + ATP + H2O = GMP + L-glutamate + AMP + diphosphate + 2 H(+). It participates in purine metabolism; GMP biosynthesis; GMP from XMP (L-Gln route): step 1/1. In terms of biological role, catalyzes the synthesis of GMP from XMP. This Methanococcus maripaludis (strain C7 / ATCC BAA-1331) protein is GMP synthase [glutamine-hydrolyzing] subunit A.